The sequence spans 378 residues: Ribosomal RNA large subunit methyltransferase G (378 aa).

This sequence belongs to the methyltransferase superfamily. RlmG family.

It localises to the cytoplasm. It carries out the reaction guanosine(1835) in 23S rRNA + S-adenosyl-L-methionine = N(2)-methylguanosine(1835) in 23S rRNA + S-adenosyl-L-homocysteine + H(+). Specifically methylates the guanine in position 1835 (m2G1835) of 23S rRNA. This Escherichia coli O139:H28 (strain E24377A / ETEC) protein is Ribosomal RNA large subunit methyltransferase G.